The chain runs to 106 residues: Transcription initiation factor IIA subunit 2 (106 aa).

The protein belongs to the TFIIA subunit 2 family. TFIIA is a heterodimer of the large unprocessed subunit 1 and a small subunit gamma. It was originally believed to be a heterotrimer of an alpha (p30), a beta (p20) and a gamma (p14) subunit. Forms a complex with Moonshiner/CG12721 and Trf2. As to expression, ubiquitous.

The protein localises to the nucleus. Functionally, TFIIA is a component of the transcription machinery of RNA polymerase II and plays an important role in transcriptional activation. TFIIA in a complex with TBP mediates transcriptional activity. Part of a rhi-dependent transcription machinery that enables the generation of piRNA precursors from heterochromatin while maintaining the suppression of transposon-encoded promoters and enhancers. Forms a complex with Moonshiner/CG12721 and Trf2 which recruit transcriptional machinery to heterochromatin to initiate the bidirectional transcription of piRNA clusters, by interacting with the RDC (rhi, del and cuff) complex that binds to repressive H3K9me3 marks in the chromatin. This mechanism allows transcription to occur in piRNA clusters despite the lack of proper promoter elements and in the presence of the repressive H3K9me3 mark. The chain is Transcription initiation factor IIA subunit 2 (TfIIA-S) from Drosophila melanogaster (Fruit fly).